The primary structure comprises 258 residues: Regulatory protein RecX (258 aa).

The protein belongs to the RecX family.

The protein resides in the cytoplasm. In terms of biological role, modulates RecA activity. This chain is Regulatory protein RecX, found in Streptococcus pneumoniae (strain 70585).